The primary structure comprises 315 residues: Glycine--tRNA ligase alpha subunit (315 aa).

The protein belongs to the class-II aminoacyl-tRNA synthetase family. As to quaternary structure, tetramer of two alpha and two beta subunits.

The protein localises to the cytoplasm. It carries out the reaction tRNA(Gly) + glycine + ATP = glycyl-tRNA(Gly) + AMP + diphosphate. The protein is Glycine--tRNA ligase alpha subunit of Sorangium cellulosum (strain So ce56) (Polyangium cellulosum (strain So ce56)).